We begin with the raw amino-acid sequence, 20 residues long: Dihydrolipoamide-residue succinyltransferase component of 2-oxoglutarate dehydrogenase complex (20 aa).

It belongs to the 2-oxoacid dehydrogenase family. As to quaternary structure, forms a 24-polypeptide structural core with octahedral symmetry. The cofactor is (R)-lipoate.

It localises to the mitochondrion membrane. The enzyme catalyses N(6)-[(R)-dihydrolipoyl]-L-lysyl-[protein] + succinyl-CoA = N(6)-[(R)-S(8)-succinyldihydrolipoyl]-L-lysyl-[protein] + CoA. It functions in the pathway amino-acid degradation; L-lysine degradation via saccharopine pathway; glutaryl-CoA from L-lysine: step 6/6. Functionally, the 2-oxoglutarate dehydrogenase complex catalyzes the overall conversion of 2-oxoglutarate to succinyl-CoA and CO(2). It contains multiple copies of three enzymatic components: 2-oxoglutarate dehydrogenase (E1), dihydrolipoamide succinyltransferase (E2) and lipoamide dehydrogenase (E3). This chain is Dihydrolipoamide-residue succinyltransferase component of 2-oxoglutarate dehydrogenase complex, found in Solanum tuberosum (Potato).